An 858-amino-acid polypeptide reads, in one-letter code: Heat shock protein 105 kDa (858 aa).

Ser2 bears the N-acetylserine mark. At Lys471 the chain carries N6-acetyllysine. Disordered regions lie at residues 500-584 and 796-858; these read KVPT…PPEA and CEPV…MDLD. The span at 504–514 shows a compositional bias: acidic residues; it reads EENEMSSEADM. Ser509 and Ser510 each carry phosphoserine. Positions 532 to 554 are enriched in polar residues; sequence QQDNSEAGTQPQVQTDAQQTSQS. Ser557 carries the phosphoserine modification. Thr561 is subject to Phosphothreonine. 2 stretches are compositionally biased toward basic and acidic residues: residues 563-584 and 805-814; these read EENKIPDADKANEKKVDQPPEA and PKIESPKLER. Ser809 bears the Phosphoserine mark. Residue Thr815 is modified to Phosphothreonine. Over residues 821–832 the composition is skewed to basic and acidic residues; sequence IDKKEEDLEDKN. The span at 849-858 shows a compositional bias: polar residues; the sequence is EKNSVNMDLD.

Belongs to the heat shock protein 70 family. Interacts with HSPA8/HSC70. Interacts with HSPA1A (via NBD) and HSPA1B (via NBD). In terms of processing, phosphorylation on Ser-509 may be important for regulation of the HSPA8/HSC70 chaperone activity. Highly expressed in testis. Present at lower levels in most brain regions, except cerebellum. Overexpressed in cancer cells.

It is found in the cytoplasm. Its function is as follows. Acts as a nucleotide-exchange factor (NEF) for chaperone proteins HSPA1A and HSPA1B, promoting the release of ADP from HSPA1A/B thereby triggering client/substrate protein release. Prevents the aggregation of denatured proteins in cells under severe stress, on which the ATP levels decrease markedly. Inhibits HSPA8/HSC70 ATPase and chaperone activities. In Homo sapiens (Human), this protein is Heat shock protein 105 kDa (HSPH1).